We begin with the raw amino-acid sequence, 152 residues long: MSKSDLNLLVENIKFEHLSIFYDFILSVLNTLSISDFELSVILCDNVYIQKLNNKFRNKNEPTDVLSFNYNEVNEDLVDGINYKIQGDLIISFEYLKFSAQEFNVEIYEELQRVTIHGILHLMGYKHETNDFQKEGMLILQENILRKNKRVF.

Zn(2+) contacts are provided by His-117, His-121, and His-127.

It belongs to the endoribonuclease YbeY family. Zn(2+) serves as cofactor.

It localises to the cytoplasm. Single strand-specific metallo-endoribonuclease involved in late-stage 70S ribosome quality control and in maturation of the 3' terminus of the 16S rRNA. In Borreliella afzelii (strain PKo) (Borrelia afzelii), this protein is Endoribonuclease YbeY.